The primary structure comprises 748 residues: Polyribonucleotide nucleotidyltransferase (748 aa).

D487 and D493 together coordinate Mg(2+). The KH domain maps to 554–613; the sequence is PSTTTIKIDKDKIRDIIGPGGKVIKEICETSGAKIDISDDGTVSVYASDRDKLKVALDKI. Residues 623-691 enclose the S1 motif domain; that stretch reads GEIFNGTVVK…NKGKAKLTIK (69 aa). The interval 695–733 is disordered; the sequence is KDKFSNNTKPKTSVNNTKDNSEPEQRHDSSKKRAWNEDN. Over residues 699–712 the composition is skewed to polar residues; sequence SNNTKPKTSVNNTK. The segment covering 713–722 has biased composition (basic and acidic residues); it reads DNSEPEQRHD.

This sequence belongs to the polyribonucleotide nucleotidyltransferase family. Requires Mg(2+) as cofactor.

The protein resides in the cytoplasm. The enzyme catalyses RNA(n+1) + phosphate = RNA(n) + a ribonucleoside 5'-diphosphate. Involved in mRNA degradation. Catalyzes the phosphorolysis of single-stranded polyribonucleotides processively in the 3'- to 5'-direction. This chain is Polyribonucleotide nucleotidyltransferase, found in Rickettsia rickettsii (strain Iowa).